Here is a 175-residue protein sequence, read N- to C-terminus: Ribosome maturation factor RimM (175 aa).

The PRC barrel domain maps to 98 to 175 (EGEYYWHQLE…EMRVDWDADF (78 aa)).

It belongs to the RimM family. In terms of assembly, binds ribosomal protein uS19.

The protein localises to the cytoplasm. In terms of biological role, an accessory protein needed during the final step in the assembly of 30S ribosomal subunit, possibly for assembly of the head region. Essential for efficient processing of 16S rRNA. May be needed both before and after RbfA during the maturation of 16S rRNA. It has affinity for free ribosomal 30S subunits but not for 70S ribosomes. This is Ribosome maturation factor RimM from Pseudomonas aeruginosa (strain UCBPP-PA14).